A 497-amino-acid chain; its full sequence is Nucleoside transporter 1 (497 aa).

At 1 to 26 the chain is on the cytoplasmic side; it reads MSLKGGTAAPAPMAPPRKWYDMTSAE. A helical membrane pass occupies residues 27 to 47; that stretch reads FYVYVVAFMCGISIMMPINAV. Residues 48-77 are Extracellular-facing; sequence FSAPSYMLEYYLYATKDPFLVPKMTNFWTN. The helical transmembrane segment at 78 to 98 threads the bilayer; that stretch reads VMTYYNLISMVTSLVVEPLTL. At 99–107 the chain is on the cytoplasmic side; the sequence is LKSFRKIPM. A helical membrane pass occupies residues 108-128; that stretch reads LVRLLGGLSVLIIEIIVLMVV. The Extracellular segment spans residues 129–135; it reads PARGTTE. A helical membrane pass occupies residues 136–156; it reads AGAVATMCIAGFIGGLGTSIF. The Cytoplasmic portion of the chain corresponds to 157–172; sequence ESTVYGMFGAFPPSFT. The chain crosses the membrane as a helical span at residues 173 to 193; the sequence is SIMMGGVGISGVLTSLIQIIV. At 194–208 the chain is on the extracellular side; the sequence is KAALPDTYEGVKKQS. The chain crosses the membrane as a helical span at residues 209–229; it reads YIYYSLDVGIQAATFIALIMM. At 230–337 the chain is on the cytoplasmic side; it reads RFNSFAQLHF…SVFSVLRSVK (108 aa). Positions 286–299 are enriched in basic and acidic residues; the sequence is NAEAHKDDPLAERE. The tract at residues 286–316 is disordered; that stretch reads NAEAHKDDPLAERELSEEESGDSRAVEAAGE. A helical membrane pass occupies residues 338 to 358; sequence WMFVACGFNFLITLFLFPGIA. Over 359 to 361 the chain is Extracellular; it reads TGM. Residues 362-382 traverse the membrane as a helical segment; that stretch reads FPESKWFATVAVFIFNCCDVL. The Cytoplasmic segment spans residues 383 to 400; that stretch reads GRFSSAFRITWPRRYNQR. A helical transmembrane segment spans residues 401 to 421; the sequence is WIIVAASFARVIFVPLLLLHS. The Extracellular portion of the chain corresponds to 422–432; it reads YHYIPSEAYGY. The chain crosses the membrane as a helical span at residues 433 to 453; it reads VMQVVFGLSSGYIASMALVLG. Residues 454-465 lie on the Cytoplasmic side of the membrane; it reads PQSKGIDNDGKR. Residues 466 to 486 traverse the membrane as a helical segment; the sequence is FVAGTLMGISILVGGTIGTVL. Topologically, residues 487–497 are extracellular; the sequence is SIMTQTIRETY.

It belongs to the SLC29A/ENT transporter (TC 2.A.57) family.

The protein localises to the cell membrane. The enzyme catalyses adenosine(in) = adenosine(out). It carries out the reaction hypoxanthine(out) = hypoxanthine(in). It catalyses the reaction inosine(in) = inosine(out). The catalysed reaction is uridine(out) = uridine(in). The enzyme catalyses cytidine(in) = cytidine(out). Nucleoside transporter with broad substrate specificity. Transports adenosine with high affinity. Can also transport hypoxanthine, inosine, uridine and cytidine. This is Nucleoside transporter 1 from Crithidia fasciculata.